The sequence spans 219 residues: Large ribosomal subunit protein uL3 (219 aa).

The disordered stretch occupies residues 133-153 (GRASHGNSRSHNVPGSIGMAQ). Gln-153 carries the post-translational modification N5-methylglutamine.

Belongs to the universal ribosomal protein uL3 family. Part of the 50S ribosomal subunit. Forms a cluster with proteins L14 and L19. Post-translationally, methylated by PrmB.

In terms of biological role, one of the primary rRNA binding proteins, it binds directly near the 3'-end of the 23S rRNA, where it nucleates assembly of the 50S subunit. The sequence is that of Large ribosomal subunit protein uL3 from Burkholderia mallei (strain NCTC 10247).